Consider the following 793-residue polypeptide: Putative potassium transporter 12 (793 aa).

The Cytoplasmic portion of the chain corresponds to 1 to 54 (MASISDSETTNHGSIWDLDQNLDQPMDEEASRLKNMYTEKKFSSILLLRLAFQS). The chain crosses the membrane as a helical span at residues 55 to 75 (LGVVFGDLGTSPLYVFYNIFP). The Extracellular segment spans residues 76–87 (HGVDDDEDVIGA). The chain crosses the membrane as a helical span at residues 88–108 (LSLIIYTLTLIPLMKYVFVVL). Topologically, residues 109–175 (RANDNGQGGT…EGHVYKKNCL (67 aa)) are cytoplasmic. A helical transmembrane segment spans residues 176 to 196 (LILVLIGTCTAIGDGILTPAI). Topologically, residues 197-215 (SVLSASGGIRVQNQKMSTD) are extracellular. A helical transmembrane segment spans residues 216 to 236 (VVVVVAVIILIGLFSMQHYGT). The Cytoplasmic segment spans residues 237–238 (DK). A helical transmembrane segment spans residues 239 to 259 (VGWLFAPIVLLWFILIGTIGA). The Extracellular portion of the chain corresponds to 260–289 (LNIHKYNSSVLKAYNPVYIYRYFRRGKSES). Asn266 is a glycosylation site (N-linked (GlcNAc...) asparagine). Residues 290 to 310 (WTSLGGIMLSITGTEALYADL) form a helical membrane-spanning segment. The Cytoplasmic portion of the chain corresponds to 311–315 (CHFPV). A helical transmembrane segment spans residues 316 to 338 (LAIQIAFTLVVFPCLLLAYTGQA). The Extracellular portion of the chain corresponds to 339-359 (AYIISNKDHVVDAFYRSIPDT). Residues 360–380 (IYWPVFIIATLAAIVASQATI) traverse the membrane as a helical segment. The Cytoplasmic portion of the chain corresponds to 381-411 (SATYSIIKQALALGCFPRVSVVHTSKKFLGQ). The helical transmembrane segment at 412 to 432 (IYIPDINWVLMILCIAVTAGF) threads the bilayer. Topologically, residues 433–444 (KNQSQIGNAYGT) are extracellular. N-linked (GlcNAc...) asparagine glycosylation is present at Asn434. The helical transmembrane segment at 445-465 (AVVIVMLVTTFLMVPIMLLVW) threads the bilayer. The Cytoplasmic portion of the chain corresponds to 466–468 (KSH). A helical transmembrane segment spans residues 469-489 (WILVVIFIVLSLMVELPYFTA). The Extracellular portion of the chain corresponds to 490-496 (CINKVDQ). The helical transmembrane segment at 497 to 517 (GGWVPLVVATTCFIIMYVWHF) threads the bilayer. The Cytoplasmic segment spans residues 518–793 (CTVKRYEFEM…LLNVGQIYYI (276 aa)).

This sequence belongs to the HAK/KUP transporter (TC 2.A.72.3) family.

It localises to the membrane. Functionally, high-affinity potassium transporter. The protein is Putative potassium transporter 12 (HAK12) of Oryza sativa subsp. japonica (Rice).